We begin with the raw amino-acid sequence, 573 residues long: SHC-transforming protein 2 (573 aa).

Residues 125–307 enclose the PID domain; it reads LGPGVSYIVR…TGLEESAWGD (183 aa). The SH2 domain maps to 478–569; it reads WYHGRMSRRA…ESELHLRGVV (92 aa).

In terms of assembly, interacts with the Trk receptors in a phosphotyrosine-dependent manner and MEGF12. Once activated, binds to GRB2. Phosphorylated on tyrosine by the Trk receptors.

Its function is as follows. Signaling adapter that couples activated growth factor receptors to signaling pathway in neurons. Involved in the signal transduction pathways of neurotrophin-activated Trk receptors in cortical neurons. This chain is SHC-transforming protein 2 (Shc2), found in Rattus norvegicus (Rat).